Here is a 241-residue protein sequence, read N- to C-terminus: Transcription initiation factor TFIID subunit 14 (241 aa).

A YEATS domain is found at 1–137 (MTTVKRTVRL…PGLLKALTAT (137 aa)). Residues 141–169 (PGYSDEGEEARKDKRKNESEVGAGKKKAK) form a disordered region. The span at 149–159 (EARKDKRKNES) shows a compositional bias: basic and acidic residues.

Belongs to the TAF14 family. Component of the fcp1/TFIIF/polII complex via interaction of tfg3 with both tfg1/TFIIF-alpha and tfg2/TFIIF-beta subunits. Component of the SWI/SNF global transcription activator complex composed of at least arp9, arp42, snf5, snf22, snf30, sbf59, sol1, ssr1, ssr2, ssr3, ssr4 and tfg3. Also interacts with the TATA-binding protein (TBP). Component of the mst2 complex composed of at least eaf6, mst2, nto1, pdp3, ptf1, ptf2 and tfg3.

Its subcellular location is the nucleus. It is found in the nucleoplasm. In terms of biological role, functions as a component of the DNA-binding general transcription factor complex TFIID, and the RNA polymerase II associated general transcription factor complex TFIIF. Binding of TFIID to a promoter (with or without TATA element) is the initial step in preinitiation complex (PIC) formation. TFIID plays a key role in the regulation of gene expression by RNA polymerase II through different activities such as transcription activator interaction, core promoter recognition and selectivity, TFIIA and TFIIB interaction, facilitation of DNA opening and initiation of transcription. TFIIF is essential for the initiation of transcription by RNA polymerase II. TFIIF functions include the recruitment of RNA polymerase II to the promoter bound DNA-TBP-TFIIB complex, decreasing the affinity of RNA polymerase II for non-specific DNA, allowing for the subsequent recruitment of TFIIE and TFIIH, and facilitating RNA polymerase II elongation. The TAF14 subunit has stimulatory activity. Component of the SWI/SNF complex, an ATP-dependent chromatin remodeling complex, required for the positive and negative regulation of gene expression of a large number of genes. It changes chromatin structure by altering DNA-histone contacts within a nucleosome, leading eventually to a change in nucleosome position, thus facilitating or repressing binding of gene-specific transcription factors. Component of the mst2 complex which is a highly specific H3 lysine 14 (H3K14) acetyltransferase that functions together with gcn5 to regulate global levels of H3K14 acetylation (H3K14ac), critical for DNA damage checkpoint activation. This Schizosaccharomyces pombe (strain 972 / ATCC 24843) (Fission yeast) protein is Transcription initiation factor TFIID subunit 14 (tfg3).